Reading from the N-terminus, the 545-residue chain is MNGIKHIFITGGVVSSIGKGLTAASLGSLLTMRGLKVFIKKLDPYLNVDPGTMNPLQHGEVFITEDGAETDLDVGHYERFLDVDLDRTANVTTGQVYSKVITLERTGRYLGETVQVIPHITDEIKRRIRLAPDDIDVIITEIGGTVGDIESQPFIEAARQIRREVGRENCCFIHVSLVPFLESAGEQKTKPTQHSVAILRAAGIQPDALVLRSDKPISSANQKKIALMCDVSAVVNAVTVPNIYEIPCVLNQHGLDKFVIKHLDLEAGEIDWSYWDDVLDAIENNRSEIEIAIIGKYTGLPDAYISVIEALRAGGFESKTKVNIKWVDSDDENLEDQLENINGACIPGGFGIRGIEGLIKAIRICREREIPTLGICLGMQCMVIEYARHVVGMHGASSTEFTDDTQWPVVTTMLEQRDILIDDQFGGTMRLGSYRAVLSIGSLAASLYGTTDIHERHRHRYEVNNGYAQRLVERGLIVSGRNTEQDLIEFIELDRKDHPFYIGTQAHPECKSRPKRPHPLFKGLVAAALARKEIAEFNSGKTVLQ.

The segment at 1-265 is amidoligase domain; the sequence is MNGIKHIFIT…DKFVIKHLDL (265 aa). Ser-15 provides a ligand contact to CTP. Ser-15 provides a ligand contact to UTP. ATP-binding positions include 16–21 and Asp-73; that span reads SIGKGL. Mg(2+) is bound by residues Asp-73 and Glu-141. CTP contacts are provided by residues 148-150, 188-193, and Lys-224; these read DIE and KTKPTQ. UTP contacts are provided by residues 188-193 and Lys-224; that span reads KTKPTQ. The Glutamine amidotransferase type-1 domain maps to 290 to 534; that stretch reads EIAIIGKYTG…VAAALARKEI (245 aa). Gly-349 serves as a coordination point for L-glutamine. The active-site Nucleophile; for glutamine hydrolysis is the Cys-376. L-glutamine-binding positions include 377 to 380, Glu-400, and Arg-460; that span reads LGMQ. Residues His-507 and Glu-509 contribute to the active site.

It belongs to the CTP synthase family. In terms of assembly, homotetramer.

The catalysed reaction is UTP + L-glutamine + ATP + H2O = CTP + L-glutamate + ADP + phosphate + 2 H(+). It catalyses the reaction L-glutamine + H2O = L-glutamate + NH4(+). The enzyme catalyses UTP + NH4(+) + ATP = CTP + ADP + phosphate + 2 H(+). It participates in pyrimidine metabolism; CTP biosynthesis via de novo pathway; CTP from UDP: step 2/2. With respect to regulation, allosterically activated by GTP, when glutamine is the substrate; GTP has no effect on the reaction when ammonia is the substrate. The allosteric effector GTP functions by stabilizing the protein conformation that binds the tetrahedral intermediate(s) formed during glutamine hydrolysis. Inhibited by the product CTP, via allosteric rather than competitive inhibition. In terms of biological role, catalyzes the ATP-dependent amination of UTP to CTP with either L-glutamine or ammonia as the source of nitrogen. Regulates intracellular CTP levels through interactions with the four ribonucleotide triphosphates. This chain is CTP synthase, found in Tropheryma whipplei (strain Twist) (Whipple's bacillus).